The chain runs to 148 residues: Large ribosomal subunit protein uL15 (148 aa).

Basic and acidic residues predominate over residues 1–12 (MSEPIKLHDLRP). The segment at 1 to 52 (MSEPIKLHDLRPAKGANKPKTRVGRGEASKGKTAGRGTKGTKARKQVSAAFE) is disordered.

It belongs to the universal ribosomal protein uL15 family. Part of the 50S ribosomal subunit.

Functionally, binds to the 23S rRNA. The chain is Large ribosomal subunit protein uL15 from Corynebacterium diphtheriae (strain ATCC 700971 / NCTC 13129 / Biotype gravis).